A 588-amino-acid polypeptide reads, in one-letter code: Putative ABC transporter ATP-binding protein PAM_020 (588 aa).

2 consecutive ABC transporter domains span residues 6 to 247 and 317 to 551; these read IIFK…GIQE and LQLQ…TSLN. ATP-binding positions include 40–47 and 351–358; these read GKNGSGKS.

Belongs to the ABC transporter superfamily.

Its subcellular location is the cell membrane. Its function is as follows. Probably part of an ABC transporter complex. Responsible for energy coupling to the transport system. The chain is Putative ABC transporter ATP-binding protein PAM_020 from Onion yellows phytoplasma (strain OY-M).